A 363-amino-acid chain; its full sequence is Ribosomal RNA large subunit methyltransferase M (363 aa).

Residues Ser-190, 223 to 226 (CPGG), Asp-242, Asp-262, and Asp-279 each bind S-adenosyl-L-methionine. The Proton acceptor role is filled by Lys-308.

Belongs to the class I-like SAM-binding methyltransferase superfamily. RNA methyltransferase RlmE family. RlmM subfamily. In terms of assembly, monomer.

The protein localises to the cytoplasm. It catalyses the reaction cytidine(2498) in 23S rRNA + S-adenosyl-L-methionine = 2'-O-methylcytidine(2498) in 23S rRNA + S-adenosyl-L-homocysteine + H(+). Its function is as follows. Catalyzes the 2'-O-methylation at nucleotide C2498 in 23S rRNA. This Vibrio atlanticus (strain LGP32) (Vibrio splendidus (strain Mel32)) protein is Ribosomal RNA large subunit methyltransferase M.